Reading from the N-terminus, the 338-residue chain is Malate dehydrogenase, mitochondrial (338 aa).

The transit peptide at 1–24 directs the protein to the mitochondrion; it reads MLSALARPASAVLRRSFSTSAQNN. Residues 31-37 and aspartate 57 contribute to the NAD(+) site; that span reads GASGGIG. Serine 33 carries an O-linked (GlcNAc) serine glycan. N6-acetyllysine; alternate is present on residues lysine 78 and lysine 91. N6-succinyllysine; alternate occurs at positions 78 and 91. Substrate is bound by residues arginine 104 and arginine 110. NAD(+)-binding positions include asparagine 117 and 140–142; that span reads IAN. Asparagine 142 provides a ligand contact to substrate. Lysine 165 is subject to N6-acetyllysine. Arginine 176 is a substrate binding site. At lysine 185 the chain carries N6-acetyllysine; alternate. An N6-succinyllysine; alternate modification is found at lysine 185. The active-site Proton acceptor is histidine 200. Lysine 203 bears the N6-succinyllysine mark. N6-acetyllysine; alternate is present on residues lysine 215 and lysine 239. N6-succinyllysine; alternate occurs at positions 215 and 239. The residue at position 239 (lysine 239) is an N6-malonyllysine; alternate. The residue at position 246 (serine 246) is a Phosphoserine. An NAD(+)-binding site is contributed by methionine 251. Lysine 269 is modified (N6-succinyllysine). N6-acetyllysine; alternate occurs at positions 296, 301, 307, 314, and 324. 5 positions are modified to N6-succinyllysine; alternate: lysine 296, lysine 301, lysine 307, lysine 314, and lysine 324. Lysine 307 carries the post-translational modification N6-malonyllysine; alternate. Residue serine 326 is modified to Phosphoserine. N6-acetyllysine; alternate is present on residues lysine 328, lysine 329, and lysine 335. Lysine 328 carries the N6-succinyllysine; alternate modification. Lysine 329 carries the post-translational modification N6-malonyllysine; alternate. Lysine 335 is subject to N6-succinyllysine; alternate.

Belongs to the LDH/MDH superfamily. MDH type 1 family. In terms of assembly, homodimer. Acetylation is enhanced after treatment either with trichostin A (TCA) or with nicotinamide (NAM) with the appearance of tri- and tetraacetylations. Glucose also increases acetylation.

It localises to the mitochondrion matrix. It catalyses the reaction (S)-malate + NAD(+) = oxaloacetate + NADH + H(+). With respect to regulation, enzyme activity is enhanced by acetylation. The sequence is that of Malate dehydrogenase, mitochondrial (MDH2) from Pongo abelii (Sumatran orangutan).